A 343-amino-acid chain; its full sequence is Protein phosphatase 2C homolog 7, mitochondrial (343 aa).

Residues 1 to 39 (MFANVGFRTLRVSRGPLYGSCSQIISFSKRTFYSSAKSG) constitute a mitochondrion transit peptide. The 267-residue stretch at 76–342 (IYQKLKDSIR…DDITVVVVRV (267 aa)) folds into the PPM-type phosphatase domain. Positions 109, 110, and 265 each coordinate Mn(2+).

Requires Mg(2+) as cofactor. The cofactor is Mn(2+).

It localises to the mitochondrion. It carries out the reaction O-phospho-L-seryl-[protein] + H2O = L-seryl-[protein] + phosphate. The enzyme catalyses O-phospho-L-threonyl-[protein] + H2O = L-threonyl-[protein] + phosphate. Its function is as follows. Protein phosphatase which positively regulates biosynthesis of the ubiquinone, coenzyme Q. Dephosphorylates and activates the ubiquinone biosynthesis protein CAT5/COQ7. Also dephosphorylates CIT1 on 'Ser-462', which leads to its activation. The protein is Protein phosphatase 2C homolog 7, mitochondrial (PTC7) of Saccharomyces cerevisiae (strain ATCC 204508 / S288c) (Baker's yeast).